Here is a 400-residue protein sequence, read N- to C-terminus: Argininosuccinate synthase (400 aa).

ATP is bound by residues 10–18 (AYSGGVDTS) and Ala-38. Tyr-89 lines the L-citrulline pocket. Gly-119 provides a ligand contact to ATP. 3 residues coordinate L-aspartate: Thr-121, Asn-125, and Asp-126. Asn-125 contributes to the L-citrulline binding site. Residues Arg-129, Ser-177, Ser-186, Glu-262, and Tyr-274 each coordinate L-citrulline.

It belongs to the argininosuccinate synthase family. Type 1 subfamily. As to quaternary structure, homotetramer.

The protein resides in the cytoplasm. The enzyme catalyses L-citrulline + L-aspartate + ATP = 2-(N(omega)-L-arginino)succinate + AMP + diphosphate + H(+). The protein operates within amino-acid biosynthesis; L-arginine biosynthesis; L-arginine from L-ornithine and carbamoyl phosphate: step 2/3. The sequence is that of Argininosuccinate synthase from Prochlorococcus marinus (strain NATL2A).